Here is a 343-residue protein sequence, read N- to C-terminus: GTPase Obg (343 aa).

The region spanning 1–159 is the Obg domain; sequence MKFLDQAKIY…RWVWLRLKLI (159 aa). Residues 160-328 enclose the OBG-type G domain; sequence ADAGLVGLPN…LLRQVMTYVA (169 aa). GTP-binding positions include 166-173, 191-195, 213-216, 280-283, and 309-311; these read GLPNAGKS, FTTLH, DIPG, NKCD, and SGV. Mg(2+) contacts are provided by serine 173 and threonine 193.

Belongs to the TRAFAC class OBG-HflX-like GTPase superfamily. OBG GTPase family. In terms of assembly, monomer. It depends on Mg(2+) as a cofactor.

It localises to the cytoplasm. In terms of biological role, an essential GTPase which binds GTP, GDP and possibly (p)ppGpp with moderate affinity, with high nucleotide exchange rates and a fairly low GTP hydrolysis rate. Plays a role in control of the cell cycle, stress response, ribosome biogenesis and in those bacteria that undergo differentiation, in morphogenesis control. The chain is GTPase Obg from Granulibacter bethesdensis (strain ATCC BAA-1260 / CGDNIH1).